A 61-amino-acid chain; its full sequence is Statherin (61 aa).

The first 19 residues, 1-19, serve as a signal peptide directing secretion; sequence MXFLXFXLXLLXMXXMXXX. The hydroxyapatite-binding; inhibits crystal growth stretch occupies residues 20-25; sequence DSSEEK. Residues serine 21 and serine 22 each carry the phosphoserine modification. The interval 37–61 is disordered; that stretch reads RYGPYQPFAPQPLYPQPYQPYQPQY. A hydrophobic; inhibits precipitation of calcium phosphate salts region spans residues 37-61; the sequence is RYGPYQPFAPQPLYPQPYQPYQPQY. A compositionally biased stretch (pro residues) spans 43-61; the sequence is PFAPQPLYPQPYQPYQPQY.

The protein belongs to the histatin/statherin family. As to expression, secreted by parotid and submandibular glands.

It localises to the secreted. Salivary protein that stabilizes saliva supersaturated with calcium salts by inhibiting the precipitation of calcium phosphate salts. It also modulates hydroxyapatite crystal formation on the tooth surface. This chain is Statherin (STATH), found in Macaca fascicularis (Crab-eating macaque).